The primary structure comprises 484 residues: Glutamyl-tRNA(Gln) amidotransferase subunit A (484 aa).

Residues Lys76 and Ser151 each act as charge relay system in the active site. The active-site Acyl-ester intermediate is the Ser175.

Belongs to the amidase family. GatA subfamily. As to quaternary structure, heterotrimer of A, B and C subunits.

It catalyses the reaction L-glutamyl-tRNA(Gln) + L-glutamine + ATP + H2O = L-glutaminyl-tRNA(Gln) + L-glutamate + ADP + phosphate + H(+). In terms of biological role, allows the formation of correctly charged Gln-tRNA(Gln) through the transamidation of misacylated Glu-tRNA(Gln) in organisms which lack glutaminyl-tRNA synthetase. The reaction takes place in the presence of glutamine and ATP through an activated gamma-phospho-Glu-tRNA(Gln). This Cellvibrio japonicus (strain Ueda107) (Pseudomonas fluorescens subsp. cellulosa) protein is Glutamyl-tRNA(Gln) amidotransferase subunit A.